A 287-amino-acid polypeptide reads, in one-letter code: Prohibitin-1 (287 aa).

The interaction with ATG8 stretch occupies residues 102–116 (VLQLPAIYQNLGLDY). Positions 109–112 (YQNL) match the AIM motif. A coiled-coil region spans residues 180–224 (EFTKAVEQKQIAQQDAERAKFLVEKAEQERQASVIRAEGEAESAE). Residues 264–287 (SQHSGGGNSESSGSPNSLLLNIGR) are disordered. Residues 272–287 (SESSGSPNSLLLNIGR) are compositionally biased toward low complexity.

This sequence belongs to the prohibitin family. The mitochondrial prohibitin complex consists of two subunits (PHB1 and PHB2). The subunits assemble into a membrane-associated ring-shaped supercomplex of approximately 1 mDa. The mitochondrial prohibitin complex interacts with the m-AAA protease, a heterohexamer composed of YTA12/RCA1 and YTA10/AFG3. The mitochondrial prohibitin complex interacts with ATG8 and the interaction may support mitophagosome assembly. Post-translationally, the N-terminus is blocked.

It is found in the mitochondrion inner membrane. Prohibitin probably acts as a holdase/unfoldase for the stabilization of newly synthesized mitochondrial proteins. Involved in mitophagy; may act as an adapter for ATG8 that supports mitophagosome assembly. Negatively regulates the proteolytic processing of ATG32 via the i-AAA protease. Acts as a negative regulator of the m-AAA protease. The chain is Prohibitin-1 (PHB1) from Saccharomyces cerevisiae (strain ATCC 204508 / S288c) (Baker's yeast).